A 745-amino-acid polypeptide reads, in one-letter code: Chitin synthase D (745 aa).

A run of 5 helical transmembrane segments spans residues 26 to 46 (LAHR…PVHL), 55 to 75 (VLML…IPWL), 412 to 432 (TTAL…SSIN), 434 to 454 (LPVG…FYLG), and 464 to 484 (LFPL…VYGI). Disordered stretches follow at residues 613 to 635 (TGDN…SLHQ) and 672 to 745 (ILPH…ESMV). Over residues 707–720 (NASTRGSMEGNTPE) the composition is skewed to polar residues.

The protein belongs to the chitin synthase family. Class VI subfamily.

Its subcellular location is the cell membrane. It catalyses the reaction [(1-&gt;4)-N-acetyl-beta-D-glucosaminyl](n) + UDP-N-acetyl-alpha-D-glucosamine = [(1-&gt;4)-N-acetyl-beta-D-glucosaminyl](n+1) + UDP + H(+). In terms of biological role, polymerizes chitin, a structural polymer of the cell wall and septum, by transferring the sugar moiety of UDP-GlcNAc to the non-reducing end of the growing chitin polymer. The sequence is that of Chitin synthase D (chsD) from Aspergillus fumigatus (strain ATCC MYA-4609 / CBS 101355 / FGSC A1100 / Af293) (Neosartorya fumigata).